The primary structure comprises 332 residues: PRKC apoptosis WT1 regulator protein (332 aa).

Polar residues-rich tracts occupy residues 1–14 and 52–62; these read MATGGYRSSGSTTD and AQTTAAGTSEL. Residues 1 to 253 are disordered; it reads MATGGYRSSG…HNRDTSAPAN (253 aa). Positions 61-65 match the B30.2/SPRY domain-binding motif motif; that stretch reads ELNHG. The span at 65–79 shows a compositional bias: low complexity; sequence GPAGAAAPAAPGPGA. The Nuclear localization signal signature appears at 137 to 153; that stretch reads RKGKGQIEKRKLREKRR. Residues 137 to 195 form a selective for apoptosis induction in cancer cells (SAC) region; sequence RKGKGQIEKRKLREKRRSTGVVNIPAAECLDEYEDDEAGQKERKREDAITQQNTIQNEA. The residue at position 155 (Thr-155) is a Phosphothreonine; by PKA. The span at 174–184 shows a compositional bias: basic and acidic residues; it reads AGQKERKREDA. The stretch at 176 to 198 forms a coiled coil; it reads QKERKREDAITQQNTIQNEAASL. The segment covering 185–195 has biased composition (polar residues); that stretch reads ITQQNTIQNEA. Position 223 is a phosphoserine (Ser-223). Basic and acidic residues predominate over residues 234–247; it reads PRTDRSGFSRHNRD. The tract at residues 292 to 332 is leucine-zipper; sequence IGKLKEEIDLLNRDLDDMEDENEQLKQENKTLLKVVGQLTR.

Homooligomer. Interacts (via the C-terminal region) with WT1. Interacts with THAP1. Interacts with AATF. Interacts with BACE1. Interacts with SPSB1 (via B30.2/SPRY domain); this interaction is direct and occurs in association with the Elongin BC complex. Interacts with SPSB2 (via B30.2/SPRY domain); this interaction occurs in association with the Elongin BC complex. Interacts with SPSB4 (via B30.2/SPRY domain); this interaction occurs in association with the Elongin BC complex. Component of a ternary complex composed of SQSTM1 and PRKCZ. Interacts with actin. In terms of processing, preferentially phosphorylated at the Thr-155 by PKC in cancer cells.

The protein localises to the cytoplasm. Its subcellular location is the nucleus. Pro-apoptotic protein capable of selectively inducing apoptosis in cancer cells, sensitizing the cells to diverse apoptotic stimuli and causing regression of tumors in animal models. Induces apoptosis in certain cancer cells by activation of the Fas prodeath pathway and coparallel inhibition of NF-kappa-B transcriptional activity. Inhibits the transcriptional activation and augments the transcriptional repression mediated by WT1. Down-regulates the anti-apoptotic protein BCL2 via its interaction with WT1. Also seems to be a transcriptional repressor by itself. May be directly involved in regulating the amyloid precursor protein (APP) cleavage activity of BACE1. The sequence is that of PRKC apoptosis WT1 regulator protein (Pawr) from Rattus norvegicus (Rat).